The following is a 200-amino-acid chain: MSGFQQHTGLVVPLDTANIDTDAIIPKQFLQKVNRIGFGKHLFHDWRFLDDAGQQPNPEFVMNAPRYKGASILLARENFGCGSSREHAPWALADYGIQVMIAPSFADIFYGNSINNQMVPVRLTEQEVDELFQFVEANEGAEITVDLEAMKVRANGKEYSFEIDEFRRHCLLNGLDNIGLTLQHADKISEFEAKIPSFLK.

The protein belongs to the LeuD family. LeuD type 1 subfamily. As to quaternary structure, heterodimer of LeuC and LeuD.

It carries out the reaction (2R,3S)-3-isopropylmalate = (2S)-2-isopropylmalate. It participates in amino-acid biosynthesis; L-leucine biosynthesis; L-leucine from 3-methyl-2-oxobutanoate: step 2/4. Catalyzes the isomerization between 2-isopropylmalate and 3-isopropylmalate, via the formation of 2-isopropylmaleate. The sequence is that of 3-isopropylmalate dehydratase small subunit from Vibrio atlanticus (strain LGP32) (Vibrio splendidus (strain Mel32)).